Here is a 141-residue protein sequence, read N- to C-terminus: Large ribosomal subunit protein uL16 (141 aa).

Residues 1 to 23 form a disordered region; the sequence is MLMPKRTKWRKQQKGRNRGKSFR.

The protein belongs to the universal ribosomal protein uL16 family. As to quaternary structure, part of the 50S ribosomal subunit.

Functionally, binds 23S rRNA and is also seen to make contacts with the A and possibly P site tRNAs. This is Large ribosomal subunit protein uL16 from Sulfurovum sp. (strain NBC37-1).